The chain runs to 534 residues: MGFCFSKFGKSQTHEIPISSSSDSSPPHHYQPLPKPTVSQGQTSNPTSNPQPKPKPAPPPPPSTSSGSQIGPILNRPMIDLSALYDLHKELGRGQFGITYKCTDKSNGREYACKSISKRKLIRRKDIEDVRREVMILQHLTGQPNIVEFRGAYEDKDNLHLVMELCSGGELFDRIIKKGSYSEKEAANIFRQIVNVVHVCHFMGVVHRDLKPENFLLVSNEEDSPIKATDFGLSVFIEEGKVYRDIVGSAYYVAPEVLHRNYGKEIDVWSAGVMLYILLSGVPPFWGETEKTIFEAILEGKLDLETSPWPTISESAKDLIRKMLIRDPKKRITAAEALEHPWMTDTKISDKPINSAVLVRMKQFRAMNKLKKLALKVIAENLSEEEIKGLKQTFKNMDTDESGTITFDELRNGLHRLGSKLTESEIKQLMEAADVDKSGTIDYIEFVTATMHRHRLEKEENLIEAFKYFDKDRSGFITRDELKHSMTEYGMGDDATIDEVINDVDTDNDGRINYEEFVAMMRKGTTDSDPKLIR.

Positions 1–72 are disordered; that stretch reads MGFCFSKFGK…STSSGSQIGP (72 aa). Gly-2 is lipidated: N-myristoyl glycine. The span at 16 to 27 shows a compositional bias: low complexity; it reads IPISSSSDSSPP. Pro residues predominate over residues 49-63; that stretch reads NPQPKPKPAPPPPPS. One can recognise a Protein kinase domain in the interval 85–343; the sequence is YDLHKELGRG…AAEALEHPWM (259 aa). ATP is bound by residues 91–99 and Lys-114; that span reads LGRGQFGIT. The active-site Proton acceptor is Asp-209. Ser-249 carries the phosphoserine modification. The interval 348 to 378 is autoinhibitory domain; the sequence is ISDKPINSAVLVRMKQFRAMNKLKKLALKVI. 4 EF-hand domains span residues 385–420, 421–456, 457–492, and 493–527; these read EEIKGLKQTFKNMDTDESGTITFDELRNGLHRLGSK, LTESEIKQLMEAADVDKSGTIDYIEFVTATMHRHRL, EKEENLIEAFKYFDKDRSGFITRDELKHSMTEYGMG, and DDATIDEVINDVDTDNDGRINYEEFVAMMRKGTTD. Residues Asp-398, Asp-400, Ser-402, Thr-404, Glu-409, Asp-434, Asp-436, Ser-438, Thr-440, Glu-445, Asp-470, Asp-472, Ser-474, Glu-481, Asp-505, Asp-507, Asp-509, Arg-511, and Glu-516 each coordinate Ca(2+).

It belongs to the protein kinase superfamily. Ser/Thr protein kinase family. CDPK subfamily.

It localises to the membrane. The enzyme catalyses L-seryl-[protein] + ATP = O-phospho-L-seryl-[protein] + ADP + H(+). It catalyses the reaction L-threonyl-[protein] + ATP = O-phospho-L-threonyl-[protein] + ADP + H(+). Its activity is regulated as follows. Activated by calcium. Autophosphorylation may play an important role in the regulation of the kinase activity. May play a role in signal transduction pathways that involve calcium as a second messenger. This Arabidopsis thaliana (Mouse-ear cress) protein is Calcium-dependent protein kinase 29 (CPK29).